A 141-amino-acid chain; its full sequence is Large ribosomal subunit protein uL11 (141 aa).

This sequence belongs to the universal ribosomal protein uL11 family. As to quaternary structure, part of the ribosomal stalk of the 50S ribosomal subunit. Interacts with L10 and the large rRNA to form the base of the stalk. L10 forms an elongated spine to which L12 dimers bind in a sequential fashion forming a multimeric L10(L12)X complex. In terms of processing, one or more lysine residues are methylated.

In terms of biological role, forms part of the ribosomal stalk which helps the ribosome interact with GTP-bound translation factors. In Listeria innocua serovar 6a (strain ATCC BAA-680 / CLIP 11262), this protein is Large ribosomal subunit protein uL11.